The primary structure comprises 424 residues: Elongation factor 1-alpha (424 aa).

In terms of domain architecture, tr-type G spans 5–223; that stretch reads KPHLNLITIG…DAFKVPEKPI (219 aa). A G1 region spans residues 14-21; it reads GHVDHGKS. 14–21 contacts GTP; it reads GHVDHGKS. S21 is a Mg(2+) binding site. The interval 70–74 is G2; the sequence is GVTID. The G3 stretch occupies residues 91 to 94; it reads DAPG. Residues 91–95 and 148–151 contribute to the GTP site; these read DAPGH and NKMD. The tract at residues 148 to 151 is G4; sequence NKMD. The tract at residues 187 to 189 is G5; that stretch reads SGY.

Belongs to the TRAFAC class translation factor GTPase superfamily. Classic translation factor GTPase family. EF-Tu/EF-1A subfamily.

It is found in the cytoplasm. It carries out the reaction GTP + H2O = GDP + phosphate + H(+). GTP hydrolase that promotes the GTP-dependent binding of aminoacyl-tRNA to the A-site of ribosomes during protein biosynthesis. The chain is Elongation factor 1-alpha from Thermoplasma acidophilum (strain ATCC 25905 / DSM 1728 / JCM 9062 / NBRC 15155 / AMRC-C165).